The primary structure comprises 256 residues: Hemin import ATP-binding protein HmuV (256 aa).

Residues 2 to 238 (ISAQNLVYSL…QALTMLYGAD (237 aa)) form the ABC transporter domain. 34-41 (GPNGAGKS) is a binding site for ATP.

It belongs to the ABC transporter superfamily. Heme (hemin) importer (TC 3.A.1.14.5) family. In terms of assembly, the complex is composed of two ATP-binding proteins (HmuV), two transmembrane proteins (HmuU) and a solute-binding protein (HmuT).

It is found in the cell inner membrane. Its function is as follows. Part of the ABC transporter complex HmuTUV involved in hemin import. Responsible for energy coupling to the transport system. The protein is Hemin import ATP-binding protein HmuV of Escherichia coli O6:K15:H31 (strain 536 / UPEC).